A 90-amino-acid chain; its full sequence is Probable Fe(2+)-trafficking protein (90 aa).

This sequence belongs to the Fe(2+)-trafficking protein family.

Its function is as follows. Could be a mediator in iron transactions between iron acquisition and iron-requiring processes, such as synthesis and/or repair of Fe-S clusters in biosynthetic enzymes. The protein is Probable Fe(2+)-trafficking protein of Thioalkalivibrio sulfidiphilus (strain HL-EbGR7).